A 367-amino-acid polypeptide reads, in one-letter code: tRNA/tmRNA (uracil-C(5))-methyltransferase (367 aa).

5 residues coordinate S-adenosyl-L-methionine: glutamine 190, tyrosine 218, asparagine 223, glutamate 239, and aspartate 299. Cysteine 324 serves as the catalytic Nucleophile. Residue glutamate 358 is the Proton acceptor of the active site.

Belongs to the class I-like SAM-binding methyltransferase superfamily. RNA M5U methyltransferase family. TrmA subfamily.

The catalysed reaction is uridine(54) in tRNA + S-adenosyl-L-methionine = 5-methyluridine(54) in tRNA + S-adenosyl-L-homocysteine + H(+). It carries out the reaction uridine(341) in tmRNA + S-adenosyl-L-methionine = 5-methyluridine(341) in tmRNA + S-adenosyl-L-homocysteine + H(+). Dual-specificity methyltransferase that catalyzes the formation of 5-methyluridine at position 54 (m5U54) in all tRNAs, and that of position 341 (m5U341) in tmRNA (transfer-mRNA). The chain is tRNA/tmRNA (uracil-C(5))-methyltransferase from Serratia proteamaculans (strain 568).